A 325-amino-acid polypeptide reads, in one-letter code: Fe-S cluster assembly protein DRE2 (325 aa).

Residues 1 to 169 (MTLGDRLGLI…KKKDAGNNEQ (169 aa)) form an N-terminal SAM-like domain region. A linker region spans residues 170-222 (VVKLSVEDVEDDLDDDPEVSNELLSKAKFFNSLSLNQDAEIDENNLIKSTDGD). Residues Cys229, Cys240, Cys243, and Cys245 each coordinate [2Fe-2S] cluster. Residues 229 to 245 (CGKTNTKKRRACKDCTC) are fe-S binding site A. Cys288, Cys291, Cys299, and Cys302 together coordinate [4Fe-4S] cluster. Short sequence motifs (cx2C motif) lie at residues 288–291 (CGSC) and 299–302 (CSGC). The segment at 288–302 (CGSCSLGDAFRCSGC) is fe-S binding site B.

It belongs to the anamorsin family. In terms of assembly, monomer. Interacts with TAH18. Interacts with MIA40. The cofactor is [2Fe-2S] cluster. It depends on [4Fe-4S] cluster as a cofactor.

It localises to the cytoplasm. The protein localises to the mitochondrion intermembrane space. Component of the cytosolic iron-sulfur (Fe-S) protein assembly (CIA) machinery required for the maturation of extramitochondrial Fe-S proteins. Part of an electron transfer chain functioning in an early step of cytosolic Fe-S biogenesis, facilitating the de novo assembly of a [4Fe-4S] cluster on the scaffold complex CFD1-NBP35. Electrons are transferred to DRE2 from NADPH via the FAD- and FMN-containing protein TAH18. TAH18-DRE2 are also required for the assembly of the diferric tyrosyl radical cofactor of ribonucleotide reductase (RNR), probably by providing electrons for reduction during radical cofactor maturation in the catalytic small subunit RNR2. This chain is Fe-S cluster assembly protein DRE2, found in Vanderwaltozyma polyspora (strain ATCC 22028 / DSM 70294 / BCRC 21397 / CBS 2163 / NBRC 10782 / NRRL Y-8283 / UCD 57-17) (Kluyveromyces polysporus).